A 447-amino-acid polypeptide reads, in one-letter code: Rab GDP dissociation inhibitor alpha (447 aa).

Ser427 carries the post-translational modification Phosphoserine.

The protein belongs to the Rab GDI family. Interacts with RHOH. Interacts with the non-phosphorylated forms of RAB1A, RAB3A, RAB5A, RAB5B, RAB5C, RAB8A, RAB8B, RAB10, RAB12, RAB35, and RAB43.

The protein localises to the cytoplasm. It is found in the golgi apparatus. It localises to the trans-Golgi network. In terms of biological role, regulates the GDP/GTP exchange reaction of most Rab proteins by inhibiting the dissociation of GDP from them, and the subsequent binding of GTP to them. Promotes the dissociation of GDP-bound Rab proteins from the membrane and inhibits their activation. Promotes the dissociation of RAB1A, RAB3A, RAB5A and RAB10 from membranes. The sequence is that of Rab GDP dissociation inhibitor alpha (GDI1) from Canis lupus familiaris (Dog).